A 113-amino-acid chain; its full sequence is Putative membrane protein insertion efficiency factor (113 aa).

Belongs to the UPF0161 family.

It is found in the cell inner membrane. In terms of biological role, could be involved in insertion of integral membrane proteins into the membrane. The protein is Putative membrane protein insertion efficiency factor of Campylobacter concisus (strain 13826).